We begin with the raw amino-acid sequence, 234 residues long: Ubiquitin domain-containing protein 2 (234 aa).

Positions 1–46 are disordered; that stretch reads MGGCVGAQHDSSGSLNENSDGTGVALGRNQPLKKEKPKWKSDYPMT. Residues 9–21 are compositionally biased toward polar residues; it reads HDSSGSLNENSDG. Over residues 32 to 41 the composition is skewed to basic and acidic residues; sequence LKKEKPKWKS. The Ubiquitin-like domain occupies 152-227; sequence SQLRLRLSTG…VQVIVSQPVQ (76 aa).

It localises to the cytoplasm. The polypeptide is Ubiquitin domain-containing protein 2 (Ubtd2) (Mus musculus (Mouse)).